Consider the following 425-residue polypeptide: Protein CLP1 homolog (425 aa).

ATP is bound by residues glutamate 18, lysine 59, and aspartate 121–threonine 126.

The protein belongs to the Clp1 family. Clp1 subfamily.

It localises to the nucleus. Functionally, required for endonucleolytic cleavage during polyadenylation-dependent pre-mRNA 3'-end formation. This chain is Protein CLP1 homolog (cbc), found in Drosophila persimilis (Fruit fly).